Consider the following 376-residue polypeptide: Ribonucleoside-diphosphate reductase subunit beta (376 aa).

Fe cation-binding residues include Asp-85, Glu-116, and His-119. Tyr-123 is an active-site residue. 3 residues coordinate Fe cation: Glu-205, Glu-239, and His-242.

The protein belongs to the ribonucleoside diphosphate reductase small chain family. In terms of assembly, tetramer of two alpha and two beta subunits. Fe cation serves as cofactor.

The catalysed reaction is a 2'-deoxyribonucleoside 5'-diphosphate + [thioredoxin]-disulfide + H2O = a ribonucleoside 5'-diphosphate + [thioredoxin]-dithiol. In terms of biological role, provides the precursors necessary for DNA synthesis. Catalyzes the biosynthesis of deoxyribonucleotides from the corresponding ribonucleotides. The protein is Ribonucleoside-diphosphate reductase subunit beta (nrdB) of Buchnera aphidicola subsp. Acyrthosiphon pisum (strain APS) (Acyrthosiphon pisum symbiotic bacterium).